Here is a 396-residue protein sequence, read N- to C-terminus: MTKTIAINAGSSSLKWQLYLMPEEKVLAKGLIERIGLKDSISTVKFDGCSEQQILDIENHTQAVKILLDDLIRFDIIKAYDEITGVGHRVVAGGEYFKESTVVEGDVLEKVEELSLLAPLHNPANAAGVRAFKELLPDITSVVVFDTSFHTSMPEKAYRYPLPTKYYTENKVRKYGAHGTSHQFVAGEAAKLLGRPLEDLKLITCHIGNGGSITAVKAGKSVDTSMGFTPLGGIMMGTRTGDIDPAIIPYLMQYTEDFNTPEDISRVLNRESGLLGVSANSSDMRDIEAAVAEGNHEASLAYEMYVDRIQKYIGQYLAVLNGADAIVFTAGVGENAENFRRDVISGISWFGCDVDDEKNVFGVTGDISTEAAKIRVLVIPTDEELVIARDVERLKK.

N8 lines the Mg(2+) pocket. ATP is bound at residue K15. Substrate is bound at residue R89. Catalysis depends on D146, which acts as the Proton donor/acceptor. Residues 206 to 210 (HIGNG), 283 to 285 (DMR), and 331 to 335 (GVGEN) each bind ATP. E383 serves as a coordination point for Mg(2+).

It belongs to the acetokinase family. Homodimer. Requires Mg(2+) as cofactor. It depends on Mn(2+) as a cofactor.

It is found in the cytoplasm. It carries out the reaction acetate + ATP = acetyl phosphate + ADP. It participates in metabolic intermediate biosynthesis; acetyl-CoA biosynthesis; acetyl-CoA from acetate: step 1/2. Functionally, catalyzes the formation of acetyl phosphate from acetate and ATP. Can also catalyze the reverse reaction. In Streptococcus pneumoniae (strain Hungary19A-6), this protein is Acetate kinase.